A 184-amino-acid polypeptide reads, in one-letter code: Cysteine proteinase inhibitor 3 (184 aa).

Positions 1-35 (MLRRRGFCCCSGAPAAAAAALLLLAVAAAAPRAAG) are cleaved as a signal peptide. In terms of domain architecture, Cystatin spans 48-134 (GMLAAIRREQ…KAVVEFRHVG (87 aa)). Positions 90 to 94 (QVVTG) match the Secondary area of contact motif. A disordered region spans residues 138-165 (SQSATAADDNAGQDTADPTVASRNDLHN).

This sequence belongs to the cystatin family. Phytocystatin subfamily.

It localises to the secreted. Functionally, specific inhibitor of cysteine proteinases. Probably involved in the regulation of endogenous processes and in defense against pests and pathogens. The protein is Cysteine proteinase inhibitor 3 of Oryza sativa subsp. japonica (Rice).